The chain runs to 119 residues: Small ribosomal subunit protein uS13 (119 aa).

The tract at residues 96-119 is disordered; the sequence is PVRGQRTKTNARTRKGPRKLIKSR.

The protein belongs to the universal ribosomal protein uS13 family. In terms of assembly, part of the 30S ribosomal subunit. Forms a loose heterodimer with protein S19. Forms two bridges to the 50S subunit in the 70S ribosome.

Its function is as follows. Located at the top of the head of the 30S subunit, it contacts several helices of the 16S rRNA. In the 70S ribosome it contacts the 23S rRNA (bridge B1a) and protein L5 of the 50S subunit (bridge B1b), connecting the 2 subunits; these bridges are implicated in subunit movement. Contacts the tRNAs in the A and P-sites. In Buchnera aphidicola subsp. Cinara cedri (strain Cc), this protein is Small ribosomal subunit protein uS13.